The primary structure comprises 270 residues: 5-deoxy-glucuronate isomerase (270 aa).

It belongs to the isomerase IolB family.

It carries out the reaction 5-deoxy-D-glucuronate = 5-dehydro-2-deoxy-D-gluconate. The protein operates within polyol metabolism; myo-inositol degradation into acetyl-CoA; acetyl-CoA from myo-inositol: step 4/7. In terms of biological role, involved in the isomerization of 5-deoxy-glucuronate (5DG) to 5-dehydro-2-deoxy-D-gluconate (DKG or 2-deoxy-5-keto-D-gluconate). The chain is 5-deoxy-glucuronate isomerase from Halalkalibacterium halodurans (strain ATCC BAA-125 / DSM 18197 / FERM 7344 / JCM 9153 / C-125) (Bacillus halodurans).